The primary structure comprises 522 residues: Na(+)/H(+) antiporter NhaB (522 aa).

The next 11 membrane-spanning stretches (helical) occupy residues 25–45 (VFLV…GWLL), 49–69 (FIFT…GMLA), 87–107 (ILAN…IYFM), 128–162 (LSLA…FYGV), 201–221 (LMMH…VGEP), 237–257 (FFFR…VTCI), 302–322 (VFVG…VGLI), 356–376 (LVVF…APVI), 388–408 (LLLF…VFVA), 446–466 (ATPN…SPLI), and 476–496 (MALP…EYVL).

The protein belongs to the NhaB Na(+)/H(+) (TC 2.A.34) antiporter family.

The protein resides in the cell inner membrane. The enzyme catalyses 2 Na(+)(in) + 3 H(+)(out) = 2 Na(+)(out) + 3 H(+)(in). Its function is as follows. Na(+)/H(+) antiporter that extrudes sodium in exchange for external protons. The protein is Na(+)/H(+) antiporter NhaB of Actinobacillus succinogenes (strain ATCC 55618 / DSM 22257 / CCUG 43843 / 130Z).